We begin with the raw amino-acid sequence, 175 residues long: NADH-ubiquinone oxidoreductase chain 6 (175 aa).

5 helical membrane passes run Met-1–Ser-21, Ser-25–Leu-45, Phe-47–Val-67, Val-88–Leu-108, and Tyr-149–Met-169.

It belongs to the complex I subunit 6 family. Core subunit of respiratory chain NADH dehydrogenase (Complex I) which is composed of 45 different subunits.

The protein resides in the mitochondrion inner membrane. The enzyme catalyses a ubiquinone + NADH + 5 H(+)(in) = a ubiquinol + NAD(+) + 4 H(+)(out). Core subunit of the mitochondrial membrane respiratory chain NADH dehydrogenase (Complex I) which catalyzes electron transfer from NADH through the respiratory chain, using ubiquinone as an electron acceptor. Essential for the catalytic activity and assembly of complex I. This Ovis aries (Sheep) protein is NADH-ubiquinone oxidoreductase chain 6 (MT-ND6).